The following is a 370-amino-acid chain: Anhydro-N-acetylmuramic acid kinase (370 aa).

ATP is bound at residue 13-20; it reads GTSMDGVD.

Belongs to the anhydro-N-acetylmuramic acid kinase family.

The enzyme catalyses 1,6-anhydro-N-acetyl-beta-muramate + ATP + H2O = N-acetyl-D-muramate 6-phosphate + ADP + H(+). The protein operates within amino-sugar metabolism; 1,6-anhydro-N-acetylmuramate degradation. It participates in cell wall biogenesis; peptidoglycan recycling. Its function is as follows. Catalyzes the specific phosphorylation of 1,6-anhydro-N-acetylmuramic acid (anhMurNAc) with the simultaneous cleavage of the 1,6-anhydro ring, generating MurNAc-6-P. Is required for the utilization of anhMurNAc either imported from the medium or derived from its own cell wall murein, and thus plays a role in cell wall recycling. This is Anhydro-N-acetylmuramic acid kinase from Vibrio parahaemolyticus serotype O3:K6 (strain RIMD 2210633).